The chain runs to 374 residues: MKMNDLIHIRRAFHQIPELGFNEFKTQKLLLDTISNMEQTRLQIKTWKTAVFVRVEGRQDYTIAYRADMDGLPITEETGYSFASKHEGAMHACGHDFHMTIALGLLDHFASHEPECHLLFIFQPAEEGPGGAKPIIEADVLGAWQPDEIYALHIDPNLPVGSIATKPGLLFANTSELFIDFQGKGGHAAYPHTANDMVVACAHFVTQVQTVVARNIDPLDSAVVTLGVIAGGTKQNVIAATARLEGTIRTLSMASMEVVKSRLEAIAAGIEASFACKIAIDYGSNYCEVYNDPELAEAFAAFSKTRKGITFVEAEEAMTGEDFGYFLKQYPGVMFWLGVDSPYGLHDSRLQPSEEAIGIAIEHMVAFLSAKKPR.

The active site involves D68. Residue E127 is the Proton acceptor of the active site.

It belongs to the peptidase M20A family. N-acetyldiaminopimelate deacetylase subfamily.

It catalyses the reaction N-acetyl-(2S,6S)-2,6-diaminopimelate + H2O = (2S,6S)-2,6-diaminopimelate + acetate. The protein operates within amino-acid biosynthesis; L-lysine biosynthesis via DAP pathway; LL-2,6-diaminopimelate from (S)-tetrahydrodipicolinate (acetylase route): step 3/3. Its function is as follows. Catalyzes the conversion of N-acetyl-diaminopimelate to diaminopimelate and acetate. This Shouchella clausii (strain KSM-K16) (Alkalihalobacillus clausii) protein is N-acetyldiaminopimelate deacetylase.